Consider the following 132-residue polypeptide: Small ribosomal subunit protein uS8 (132 aa).

This sequence belongs to the universal ribosomal protein uS8 family. As to quaternary structure, part of the 30S ribosomal subunit. Contacts proteins S5 and S12.

In terms of biological role, one of the primary rRNA binding proteins, it binds directly to 16S rRNA central domain where it helps coordinate assembly of the platform of the 30S subunit. This is Small ribosomal subunit protein uS8 from Macrococcus caseolyticus (strain JCSC5402) (Macrococcoides caseolyticum).